Consider the following 496-residue polypeptide: Lysine--tRNA ligase (496 aa).

Residues Glu403 and Glu410 each contribute to the Mg(2+) site.

Belongs to the class-II aminoacyl-tRNA synthetase family. As to quaternary structure, homodimer. Mg(2+) serves as cofactor.

The protein localises to the cytoplasm. The enzyme catalyses tRNA(Lys) + L-lysine + ATP = L-lysyl-tRNA(Lys) + AMP + diphosphate. The chain is Lysine--tRNA ligase from Aster yellows witches'-broom phytoplasma (strain AYWB).